Here is a 907-residue protein sequence, read N- to C-terminus: Eukaryotic translation initiation factor 4 gamma 2 (907 aa).

An N-acetylmethionine modification is found at Met1. The interval Met1–Lys71 is disordered. Ser11 carries the post-translational modification Phosphoserine. The MIF4G domain maps to Phe78–His308. Thr89 is subject to Phosphothreonine. Arg360 bears the Omega-N-methylarginine mark. A Phosphoserine modification is found at Ser395. Residue Lys431 is modified to N6-methyllysine. Ser443 bears the Phosphoserine mark. The segment at Pro498 to Lys541 is disordered. Polar residues predominate over residues Pro503–Gln516. Arg505 is modified (omega-N-methylarginine). Residues Thr508 and Thr514 each carry the phosphothreonine modification. The MI domain maps to Glu543–Glu666. A Glycyl lysine isopeptide (Lys-Gly) (interchain with G-Cter in SUMO2) cross-link involves residue Lys575. Residues Glu720–Glu904 enclose the W2 domain. Ser902 is subject to Phosphoserine.

The protein belongs to the eukaryotic initiation factor 4G family. As to quaternary structure, interacts with the serine/threonine protein kinases MKNK1 and MKNK2. Binds EIF4A and EIF3. Interacts with MIF4GD. Interacts with DAZAP2. Phosphorylation; hyperphosphorylated during mitosis.

In terms of biological role, appears to play a role in the switch from cap-dependent to IRES-mediated translation during mitosis, apoptosis and viral infection. Cleaved by some caspases and viral proteases. The sequence is that of Eukaryotic translation initiation factor 4 gamma 2 (EIF4G2) from Bos taurus (Bovine).